A 176-amino-acid polypeptide reads, in one-letter code: uncharacterized protein (176 aa).

The segment covering 87–100 has biased composition (low complexity); it reads ASASSQLRASRVQS. Residues 87–109 are disordered; the sequence is ASASSQLRASRVQSGTRQSARAG.

This is an uncharacterized protein from Homo sapiens (Human).